The primary structure comprises 422 residues: Tryptophan synthase beta chain (422 aa).

K87 is subject to N6-(pyridoxal phosphate)lysine.

This sequence belongs to the TrpB family. In terms of assembly, tetramer of two alpha and two beta chains. Pyridoxal 5'-phosphate is required as a cofactor.

It catalyses the reaction (1S,2R)-1-C-(indol-3-yl)glycerol 3-phosphate + L-serine = D-glyceraldehyde 3-phosphate + L-tryptophan + H2O. It functions in the pathway amino-acid biosynthesis; L-tryptophan biosynthesis; L-tryptophan from chorismate: step 5/5. Functionally, the beta subunit is responsible for the synthesis of L-tryptophan from indole and L-serine. This chain is Tryptophan synthase beta chain (trpB), found in Haloferax volcanii (strain ATCC 29605 / DSM 3757 / JCM 8879 / NBRC 14742 / NCIMB 2012 / VKM B-1768 / DS2) (Halobacterium volcanii).